The following is a 129-amino-acid chain: uncharacterized protein (129 aa).

Over residues 86–96 (NDGFSSDDEPE) the composition is skewed to acidic residues. Positions 86-129 (NDGFSSDDEPEEHVILTEDNQGEPSETPQATFDITEFIKTEDED) are disordered. Residues 103-117 (EDNQGEPSETPQATF) show a composition bias toward polar residues.

Belongs to the asfivirus D129L family.

This is an uncharacterized protein from African swine fever virus (isolate Tick/South Africa/Pretoriuskop Pr4/1996) (ASFV).